A 209-amino-acid chain; its full sequence is Uracil phosphoribosyltransferase (209 aa).

Residues Arg-79, Arg-104, and 131–139 (DPMLATGGS) each bind 5-phospho-alpha-D-ribose 1-diphosphate. Residues Ile-194 and 199–201 (GDA) each bind uracil. Asp-200 serves as a coordination point for 5-phospho-alpha-D-ribose 1-diphosphate.

The protein belongs to the UPRTase family. Requires Mg(2+) as cofactor.

The enzyme catalyses UMP + diphosphate = 5-phospho-alpha-D-ribose 1-diphosphate + uracil. It participates in pyrimidine metabolism; UMP biosynthesis via salvage pathway; UMP from uracil: step 1/1. Allosterically activated by GTP. In terms of biological role, catalyzes the conversion of uracil and 5-phospho-alpha-D-ribose 1-diphosphate (PRPP) to UMP and diphosphate. The polypeptide is Uracil phosphoribosyltransferase (Streptococcus suis (strain 05ZYH33)).